Reading from the N-terminus, the 316-residue chain is MSDGNTAAAWVPTGSVTVRVPGKVNLYLAVGDRREDGYHELTTIFQAVSLLDEVTVRNADVLSLDIVGEGADKLPTDERNLAWQAAELMAEHVGRAPDVSIMIDKSIPVAGGMAGGSADAAAVLVAMNSLWELNVPRRDLRMLAAQLGSDVPFALHGGTALGTGRGEELATVLSRNTFHWVLAFADGELLTRKVFAELDRLRRAGDPPRLPGPGPVLAALAAGDADQLAPLLGNEMQAAAVSLNPGLRRTLRAGVQAGALAGIVSGSGPTCAFLCPSAAAAVDVGTEVSGVGVCRTVRVASGPVAGARVVPAPTEV.

The active site involves K23. ATP is bound at residue 108 to 118; the sequence is PVAGGMAGGSA. Residue D150 is part of the active site.

Belongs to the GHMP kinase family. IspE subfamily.

It carries out the reaction 4-CDP-2-C-methyl-D-erythritol + ATP = 4-CDP-2-C-methyl-D-erythritol 2-phosphate + ADP + H(+). It functions in the pathway isoprenoid biosynthesis; isopentenyl diphosphate biosynthesis via DXP pathway; isopentenyl diphosphate from 1-deoxy-D-xylulose 5-phosphate: step 3/6. In terms of biological role, catalyzes the phosphorylation of the position 2 hydroxy group of 4-diphosphocytidyl-2C-methyl-D-erythritol. In Mycobacterium avium (strain 104), this protein is 4-diphosphocytidyl-2-C-methyl-D-erythritol kinase.